The primary structure comprises 312 residues: Dihydroorotate dehydrogenase B (NAD(+)), catalytic subunit (312 aa).

FMN is bound by residues S23 and 47-48 (KA). Substrate contacts are provided by residues K47 and 71 to 75 (NAIGL). 2 residues coordinate FMN: N102 and N130. Substrate is bound at residue N130. C133 serves as the catalytic Nucleophile. FMN-binding residues include K168 and I194. 195–196 (NT) provides a ligand contact to substrate. Residues G220, 246–247 (GG), and 268–269 (GT) contribute to the FMN site.

The protein belongs to the dihydroorotate dehydrogenase family. Type 1 subfamily. Heterotetramer of 2 PyrK and 2 PyrD type B subunits. FMN serves as cofactor.

The protein localises to the cytoplasm. The catalysed reaction is (S)-dihydroorotate + NAD(+) = orotate + NADH + H(+). It participates in pyrimidine metabolism; UMP biosynthesis via de novo pathway; orotate from (S)-dihydroorotate (NAD(+) route): step 1/1. In terms of biological role, catalyzes the conversion of dihydroorotate to orotate with NAD(+) as electron acceptor. The sequence is that of Dihydroorotate dehydrogenase B (NAD(+)), catalytic subunit (pyrDB) from Enterococcus faecalis (strain ATCC 700802 / V583).